Here is a 1160-residue protein sequence, read N- to C-terminus: Pesticidal crystal protein Cry8Ca (1160 aa).

Belongs to the delta endotoxin family.

Its function is as follows. Promotes colloidosmotic lysis by binding to the midgut epithelial cells of insects. Active on various scarabaeid beetles such as Anomala cuprea, A.rufocuprea and Popillia japonica. In Bacillus thuringiensis subsp. japonensis, this protein is Pesticidal crystal protein Cry8Ca (cry8Ca).